Reading from the N-terminus, the 227-residue chain is Flagellar L-ring protein (227 aa).

The first 15 residues, 1 to 15 (MRTWAVLPILLMLVG), serve as a signal peptide directing secretion. The N-palmitoyl cysteine moiety is linked to residue cysteine 16. Residue cysteine 16 is the site of S-diacylglycerol cysteine attachment.

Belongs to the FlgH family. The basal body constitutes a major portion of the flagellar organelle and consists of four rings (L,P,S, and M) mounted on a central rod.

It is found in the cell outer membrane. The protein resides in the bacterial flagellum basal body. Functionally, assembles around the rod to form the L-ring and probably protects the motor/basal body from shearing forces during rotation. In Syntrophotalea carbinolica (strain DSM 2380 / NBRC 103641 / GraBd1) (Pelobacter carbinolicus), this protein is Flagellar L-ring protein.